The chain runs to 452 residues: Scaffold protein ILK (452 aa).

An N-acetylmethionine modification is found at Met1. ANK repeat units follow at residues 2–30 (DDIF…LNQG), 31–63 (DDHG…INVM), 64–96 (NRGD…INAV), 97–129 (NEHG…VSIC), and 130–174 (NKYG…GTTR). The segment at 33 to 139 (HGFSPLHWAC…NKYGEMPVDK (107 aa)) is interaction with LIMS1. Phosphothreonine; by PAK1 is present on Thr173. The interval 180–212 (GTLNKHSGIDFKQLNFLTKLNENHSGELWKGRW) is PH-like; mediates interaction with TGFB1I1. Ser186 carries the phosphoserine modification. Residues 193 to 446 (LNFLTKLNEN…PKFDMIVPIL (254 aa)) form the Protein kinase domain. The ATP site is built by Asn200, Asn202, His203, Ser204, and Lys220. Ser246 carries the phosphoserine; by PAK1 modification. The ATP site is built by His270, Met272, and Asn279. Residue Asp339 participates in Mg(2+) binding. Position 341 (Lys341) interacts with ATP. A Nuclear localization signal motif is present at residues 363–371 (KKPEDTNRR). An N6-acetyllysine modification is found at Lys426.

It belongs to the protein kinase superfamily. TKL Ser/Thr protein kinase family. Component of the heterotrimeric IPP (ILK-PINCH-PARVIN) complex composed of ILK, LIMS1/PINCH and PARVA; the complex binds to F-actin via the C-terminal tail of LIMS1 and the N-terminal region of PARVA, promoting F-actin filament bundling. Formation of the IPP complex is dependent on protein kinase C and precedes integrin-mediated cell adhesion and spreading. ILK also interacts with LIMS2/PINCH2 and with PARVB and PARVG which may substitute for LIMS1 and PARVA in the IPP complex; PARVA and PARVB compete for the same binding site. Interaction with PARVG promotes the establishment of cell polarity required for leukocyte migration. Interacts with the cytoplasmic domain of integrin ITGB1 and may also interact with integrins ITGB2, ITGB3 and/or ITGB5. Interacts probably also with TGFB1I1. Interacts (via ANK repeats) with EPHA1 (via SAM domain); stimulated by EFNA1 but independent of the kinase activity of EPHA1. Interacts with FERMT2. Interacts with LIMD2; leading to activate the protein kinase activity. Interacts with PXN/PAXILLIN (via LD motif 4). Interacts with CCDC25 (via cytoplasmic region); initiating the ILK-PARVB cascade to induce cytoskeleton rearrangement and directional migration of cells. Interacts with IQGAP1; the interaction is required for localization of IQGAP1 to the cell cortex. Phosphorylation by PAK1 modulates ILK subcellular location by promoting its nuclear export. As to expression, highly expressed in heart followed by skeletal muscle, pancreas and kidney. Weakly expressed in placenta, lung and liver.

The protein resides in the cell junction. Its subcellular location is the focal adhesion. The protein localises to the cell membrane. It localises to the cell projection. It is found in the lamellipodium. The protein resides in the cytoplasm. Its subcellular location is the myofibril. The protein localises to the sarcomere. It localises to the nucleus. It is found in the cytoskeleton. The protein resides in the microtubule organizing center. Its subcellular location is the centrosome. The protein localises to the cell cortex. Its function is as follows. Scaffold protein which mediates protein-protein interactions during a range of cellular events including focal adhesion assembly, cell adhesion and cell migration. Regulates integrin-mediated signal transduction by contributing to inside-out integrin activation. Recruits PARVA and LIMS1/PITCH to form the heterotrimeric IPP (ILK-PINCH-PARVIN) complex which binds to F-actin via the C-terminal tail of LIMS1 and the N-terminal region of PARVA, promoting F-actin filament bundling, a process required to generate force for actin cytoskeleton reorganization and subsequent dynamic cell adhesion events such as cell spreading and migration. Binding to PARVA promotes effective assembly of ILK into focal adhesions while PARVA-bound ILK can simultaneously engage integrin-beta cytoplasmic tails to mediate cell adhesion. Plays a role with PARVG in promoting the cell adhesion and spreading of leukocytes. Acts as an upstream effector of both AKT1/PKB and GSK3. Mediates trafficking of caveolae to the cell surface in an ITGB1-dependent manner by promoting the recruitment of IQGAP1 to the cell cortex which cooperates with its effector DIAPH1 to locally stabilize microtubules and allow stable insertion of caveolae into the plasma membrane. Required for the maintenance of mitotic spindle integrity by promoting phosphorylation of TACC3 by AURKA. Associates with chromatin and may act as a negative regulator of transcription when located in the nucleus. In Homo sapiens (Human), this protein is Scaffold protein ILK.